Here is a 201-residue protein sequence, read N- to C-terminus: UPF0301 protein RHECIAT_CH0001061 (201 aa).

The protein belongs to the UPF0301 (AlgH) family.

This Rhizobium etli (strain CIAT 652) protein is UPF0301 protein RHECIAT_CH0001061.